The primary structure comprises 576 residues: Arginine--tRNA ligase (576 aa).

The short motif at 126 to 136 (ANPTGPMHIGH) is the 'HIGH' region element.

The protein belongs to the class-I aminoacyl-tRNA synthetase family. Monomer.

The protein resides in the cytoplasm. It carries out the reaction tRNA(Arg) + L-arginine + ATP = L-arginyl-tRNA(Arg) + AMP + diphosphate. This chain is Arginine--tRNA ligase, found in Rickettsia rickettsii (strain Iowa).